A 311-amino-acid chain; its full sequence is Iron-binding protein YfeA (311 aa).

The signal sequence occupies residues 1-31; that stretch reads MIERLNSPFLRAAALFTIVAFSSLISTAALA. Positions 76, 141, 207, and 282 each coordinate Fe(2+).

The protein belongs to the bacterial solute-binding protein 9 family. As to quaternary structure, monomer.

Its subcellular location is the periplasm. Functionally, part of the ATP-binding cassette (ABC) transport system YfeABC involved in iron import. Binds iron with high affinity and specificity and delivers it to the membrane permease for translocation into the cytoplasm. Also binds Mn(2+) and Zn(2+). This is Iron-binding protein YfeA (yfeA) from Yersinia pestis.